The primary structure comprises 330 residues: Probable cytosolic iron-sulfur protein assembly protein ciao1-A (330 aa).

7 WD repeats span residues 14 to 53 (HPDS…WECK), 59 to 98 (GHQR…FECL), 103 to 142 (GHEN…EYEC), 148 to 187 (SHTQ…WECR), 192 to 231 (GHTS…GGQD), 243 to 282 (FHGR…DPDQ), and 294 to 330 (AHSQ…QSEV).

Belongs to the WD repeat CIA1 family. As to quaternary structure, component of the CIA complex.

Key component of the cytosolic iron-sulfur protein assembly (CIA) complex, a multiprotein complex that mediates the incorporation of iron-sulfur cluster into extramitochondrial Fe/S proteins. This is Probable cytosolic iron-sulfur protein assembly protein ciao1-A (ciao1a) from Salmo salar (Atlantic salmon).